The chain runs to 290 residues: 33 kDa chaperonin (290 aa).

2 cysteine pairs are disulfide-bonded: Cys-235–Cys-237 and Cys-268–Cys-271.

It belongs to the HSP33 family. Post-translationally, under oxidizing conditions two disulfide bonds are formed involving the reactive cysteines. Under reducing conditions zinc is bound to the reactive cysteines and the protein is inactive.

Its subcellular location is the cytoplasm. Functionally, redox regulated molecular chaperone. Protects both thermally unfolding and oxidatively damaged proteins from irreversible aggregation. Plays an important role in the bacterial defense system toward oxidative stress. In Streptococcus sanguinis (strain SK36), this protein is 33 kDa chaperonin.